Reading from the N-terminus, the 98-residue chain is NADH-ubiquinone oxidoreductase chain 4L (98 aa).

A run of 3 helical transmembrane segments spans residues 1–21 (MSLT…GLLM), 29–49 (SLLC…MTIL), and 61–81 (IILL…LVMV).

It belongs to the complex I subunit 4L family. Core subunit of respiratory chain NADH dehydrogenase (Complex I) which is composed of 45 different subunits.

It localises to the mitochondrion inner membrane. The catalysed reaction is a ubiquinone + NADH + 5 H(+)(in) = a ubiquinol + NAD(+) + 4 H(+)(out). In terms of biological role, core subunit of the mitochondrial membrane respiratory chain NADH dehydrogenase (Complex I) which catalyzes electron transfer from NADH through the respiratory chain, using ubiquinone as an electron acceptor. Part of the enzyme membrane arm which is embedded in the lipid bilayer and involved in proton translocation. The protein is NADH-ubiquinone oxidoreductase chain 4L (MT-ND4L) of Vampyressa brocki (Brock's yellow-eared bat).